The chain runs to 98 residues: Small ribosomal subunit protein bS16 (98 aa).

It belongs to the bacterial ribosomal protein bS16 family.

This is Small ribosomal subunit protein bS16 from Pseudothermotoga lettingae (strain ATCC BAA-301 / DSM 14385 / NBRC 107922 / TMO) (Thermotoga lettingae).